Reading from the N-terminus, the 379-residue chain is tRNA-specific 2-thiouridylase MnmA (379 aa).

Residues 9–16 (AMSGGVDS) and M35 each bind ATP. An interaction with target base in tRNA region spans residues 94-96 (NPD). The active-site Nucleophile is the C99. An intrachain disulfide couples C99 to C195. G123 serves as a coordination point for ATP. The segment at 145–147 (KDQ) is interaction with tRNA. C195 functions as the Cysteine persulfide intermediate in the catalytic mechanism. The interaction with tRNA stretch occupies residues 307-308 (RY).

The protein belongs to the MnmA/TRMU family.

Its subcellular location is the cytoplasm. It catalyses the reaction S-sulfanyl-L-cysteinyl-[protein] + uridine(34) in tRNA + AH2 + ATP = 2-thiouridine(34) in tRNA + L-cysteinyl-[protein] + A + AMP + diphosphate + H(+). Catalyzes the 2-thiolation of uridine at the wobble position (U34) of tRNA, leading to the formation of s(2)U34. The sequence is that of tRNA-specific 2-thiouridylase MnmA from Xylella fastidiosa (strain M23).